The chain runs to 339 residues: Ferrochelatase (339 aa).

Residues histidine 202 and glutamate 283 each coordinate Fe cation.

It belongs to the ferrochelatase family.

The protein localises to the cytoplasm. It carries out the reaction heme b + 2 H(+) = protoporphyrin IX + Fe(2+). Its pathway is porphyrin-containing compound metabolism; protoheme biosynthesis; protoheme from protoporphyrin-IX: step 1/1. Its function is as follows. Catalyzes the ferrous insertion into protoporphyrin IX. This Psychrobacter arcticus (strain DSM 17307 / VKM B-2377 / 273-4) protein is Ferrochelatase.